The sequence spans 1019 residues: Type VI secretion system spike protein VgrG2b (1019 aa).

The tract at residues 268–291 (AGRPFTESRLRGHRRDARVASVSG) is disordered. Histidine 935 contacts Zn(2+). Glutamate 936 is a catalytic residue. Positions 939 and 983 each coordinate Zn(2+).

It belongs to the VgrG protein family. In terms of assembly, interacts with Tla3; this interaction promotes Tle3 loading onto VgrG2b. Interacts with host gamma-tubulin ring complex components GCP1 and GCP4. Zn(2+) is required as a cofactor.

Its subcellular location is the secreted. Part of the H2 type VI secretion system (H2-T6SS) specialized secretion system, which delivers several virulence factors in both prokaryotic and eukaryotic cells during infection. Forms the spike at the tip of the elongating tube probably formed by haemolysin co-regulated protein 2b/Hcp2b. Allows the delivery of the Tle3 antibacterial toxin to target cells where it exerts its toxicity. Additionally, acts directly as an effector and promotes internalization by interacting with the host gamma-tubulin ring complex. Elicits toxicity also in the bacterial periplasm and disrupts bacterial cell morphology. Toxicity is counteracted by a cognate immunity protein. The sequence is that of Type VI secretion system spike protein VgrG2b (vgrG2b) from Pseudomonas aeruginosa (strain ATCC 15692 / DSM 22644 / CIP 104116 / JCM 14847 / LMG 12228 / 1C / PRS 101 / PAO1).